Reading from the N-terminus, the 479-residue chain is UDP-glycosyltransferase 85A5 (479 aa).

Residues Ser-301, 358–360, 375–383, and 397–400 each bind UDP-alpha-D-glucose; these read CPQ, HSGWNSTLE, and FAEQ.

Belongs to the UDP-glycosyltransferase family. Expressed in roots, shoots and leaves.

This Arabidopsis thaliana (Mouse-ear cress) protein is UDP-glycosyltransferase 85A5 (UGT85A5).